The sequence spans 478 residues: Cytochrome c-552 (478 aa).

The signal sequence occupies residues 1–26 (MTRIKINARRIFSLLIPFFFFTSVHA). Residue histidine 94 participates in heme c binding. Positions 122, 125, and 126 each coordinate heme. Heme c contacts are provided by cysteine 160, cysteine 163, histidine 164, cysteine 209, cysteine 212, and histidine 213. The Ca(2+) site is built by glutamate 215, tyrosine 216, lysine 261, and glutamine 263. Tyrosine 216 contacts substrate. Histidine 264 provides a ligand contact to substrate. Residues histidine 275, cysteine 282, cysteine 285, histidine 286, histidine 301, cysteine 314, cysteine 317, histidine 318, and histidine 393 each coordinate heme c.

This sequence belongs to the cytochrome c-552 family. Ca(2+) is required as a cofactor. The cofactor is heme c.

The protein localises to the periplasm. The enzyme catalyses 6 Fe(III)-[cytochrome c] + NH4(+) + 2 H2O = 6 Fe(II)-[cytochrome c] + nitrite + 8 H(+). It functions in the pathway nitrogen metabolism; nitrate reduction (assimilation). Functionally, catalyzes the reduction of nitrite to ammonia, consuming six electrons in the process. This Escherichia coli O9:H4 (strain HS) protein is Cytochrome c-552.